The sequence spans 343 residues: MAEDDLESLPGVGPATADKLVESGYDSYQSIAVASPGELSNKADIGSSTASDIINAARDAADVGGFETGSMVLERRQQIGKLSWQIDEVDELLGGGLETQSITEVYGEFGAGKSQITHQLAVNVQLPPEQGGLGGGCIFIDSEDTFRPERIDDMVRGLEDEALEATLDDREMEGSIDDEETIKALVDDFLDKIHVAKAFNSNHQILLAEKAKELAGEHEDTEWPVRLLCVDSLTAHFRAEYVGRGELAERQQKLNKHLHDLMRIGDLFNTGILVTNQVSSNPDSYFGDPTQPIGGNILGHTSTFRIYLRKSKGDKRIVRLVDAPNLADGEAIMRVQDAGLKPE.

ATP is bound at residue 107–114 (GEFGAGKS).

Belongs to the eukaryotic RecA-like protein family.

Functionally, involved in DNA repair and in homologous recombination. Binds and assembles on single-stranded DNA to form a nucleoprotein filament. Hydrolyzes ATP in a ssDNA-dependent manner and promotes DNA strand exchange between homologous DNA molecules. In addition to its role in homologous recombination plays a critical role in maintenance and/or replication of some plasmids, but not in plasmid transformation. The chain is DNA repair and recombination protein RadA (radA) from Haloferax volcanii (strain ATCC 29605 / DSM 3757 / JCM 8879 / NBRC 14742 / NCIMB 2012 / VKM B-1768 / DS2) (Halobacterium volcanii).